Consider the following 211-residue polypeptide: UPF0637 protein BLi01683/BL05149 (211 aa).

Belongs to the UPF0637 family.

The sequence is that of UPF0637 protein BLi01683/BL05149 from Bacillus licheniformis (strain ATCC 14580 / DSM 13 / JCM 2505 / CCUG 7422 / NBRC 12200 / NCIMB 9375 / NCTC 10341 / NRRL NRS-1264 / Gibson 46).